We begin with the raw amino-acid sequence, 87 residues long: Putative phytosulfokines 4 (87 aa).

An N-terminal signal peptide occupies residues 1–23 (MANLSTLITIALLLCATMLTCSA). Residues 24–77 (RPEPAYFASFTTSPADTLSLEMIESKLHEVAGESCDKEDDEDCLVRRTLTAHLD) constitute a propeptide that is removed on maturation. Residues tyrosine 78 and tyrosine 80 each carry the sulfotyrosine modification. Positions 83 to 87 (KNNHH) are excised as a propeptide.

Belongs to the phytosulfokine family. In terms of processing, sulfation is important for activity and for the binding to a putative membrane receptor.

It localises to the secreted. In terms of biological role, promotes plant cell differentiation, organogenesis and somatic embryogenesis as well as cell proliferation. The chain is Putative phytosulfokines 4 (PSK4) from Arabidopsis thaliana (Mouse-ear cress).